The primary structure comprises 490 residues: Beta-1,3-glucan-binding protein 1 (490 aa).

The N-terminal stretch at 1–19 is a signal peptide; the sequence is MYKQTVVIFLLCFFICVSC. Residues 20–119 form the CBM39 domain; that stretch reads YEVPPAKLEA…GEWTVTGYVD (100 aa). A GH16 domain is found at 152–490; the sequence is PPTSQNTYPC…QVDYVRVYAL (339 aa). N372 carries N-linked (GlcNAc...) asparagine glycosylation.

The protein belongs to the insect beta-1,3-glucan binding protein family. As to quaternary structure, monomer. Hemolymph.

The protein resides in the secreted. Plays a role in the recognition of invading microorganisms activating the phenoloxidase cascade. Binds specifically to beta-1,3-glucan. Binds the Aspergillus niger cell wall component alpha-1,3-glucan, a fungal pathogen-associated molecular pattern (PAMP) that activates the host immune response. This chain is Beta-1,3-glucan-binding protein 1, found in Galleria mellonella (Greater wax moth).